The sequence spans 281 residues: Ribosomal RNA small subunit methyltransferase A (281 aa).

Positions 36, 38, 63, 84, 109, and 127 each coordinate S-adenosyl-L-methionine.

The protein belongs to the class I-like SAM-binding methyltransferase superfamily. rRNA adenine N(6)-methyltransferase family. RsmA subfamily.

Its subcellular location is the cytoplasm. It carries out the reaction adenosine(1518)/adenosine(1519) in 16S rRNA + 4 S-adenosyl-L-methionine = N(6)-dimethyladenosine(1518)/N(6)-dimethyladenosine(1519) in 16S rRNA + 4 S-adenosyl-L-homocysteine + 4 H(+). Functionally, specifically dimethylates two adjacent adenosines (A1518 and A1519) in the loop of a conserved hairpin near the 3'-end of 16S rRNA in the 30S particle. May play a critical role in biogenesis of 30S subunits. The polypeptide is Ribosomal RNA small subunit methyltransferase A (Borreliella afzelii (strain PKo) (Borrelia afzelii)).